A 544-amino-acid polypeptide reads, in one-letter code: Exodeoxyribonuclease 7 large subunit (544 aa).

A disordered region spans residues 522 to 544 (PETPPKSRKADNPPEPPEQTSFL).

The protein belongs to the XseA family. As to quaternary structure, heterooligomer composed of large and small subunits.

The protein localises to the cytoplasm. The catalysed reaction is Exonucleolytic cleavage in either 5'- to 3'- or 3'- to 5'-direction to yield nucleoside 5'-phosphates.. Its function is as follows. Bidirectionally degrades single-stranded DNA into large acid-insoluble oligonucleotides, which are then degraded further into small acid-soluble oligonucleotides. The polypeptide is Exodeoxyribonuclease 7 large subunit (Zymomonas mobilis subsp. mobilis (strain ATCC 31821 / ZM4 / CP4)).